A 258-amino-acid polypeptide reads, in one-letter code: MDKTIVFKCGGSVIRELSDTFYENVRSLQAAGFKLAIVHGGGPEITNMLQKLDVKTEFVDGQRKTTKPVLEVAEMVLSGTVNKYFVSELAKHDISSVGVSGKDGQMLVADFLDQDVYGYVGEIKEVHPEMAEALMEKQFIPVIAPLSMTEECQTLNVNADLAASAVAGAMKADKLMFVTDVEGILKNGELLDVVTEQEALTLIDEGIISGGMIPKVQSALSALSGDVDEVMIVNGKGSIFTGETFKGTRIVKEKEAVL.

Residues 41 to 42 (GG), arginine 63, and asparagine 156 contribute to the substrate site.

It belongs to the acetylglutamate kinase family. ArgB subfamily.

It is found in the cytoplasm. It catalyses the reaction N-acetyl-L-glutamate + ATP = N-acetyl-L-glutamyl 5-phosphate + ADP. It functions in the pathway amino-acid biosynthesis; L-arginine biosynthesis; N(2)-acetyl-L-ornithine from L-glutamate: step 2/4. Catalyzes the ATP-dependent phosphorylation of N-acetyl-L-glutamate. The chain is Acetylglutamate kinase from Bacillus pumilus (strain SAFR-032).